The primary structure comprises 238 residues: Demethylmenaquinone methyltransferase (238 aa).

Residues threonine 65, aspartate 85, and 109–110 (DA) each bind S-adenosyl-L-methionine.

The protein belongs to the class I-like SAM-binding methyltransferase superfamily. MenG/UbiE family.

It catalyses the reaction a 2-demethylmenaquinol + S-adenosyl-L-methionine = a menaquinol + S-adenosyl-L-homocysteine + H(+). It functions in the pathway quinol/quinone metabolism; menaquinone biosynthesis; menaquinol from 1,4-dihydroxy-2-naphthoate: step 2/2. In terms of biological role, methyltransferase required for the conversion of demethylmenaquinol (DMKH2) to menaquinol (MKH2). This Roseiflexus sp. (strain RS-1) protein is Demethylmenaquinone methyltransferase.